The primary structure comprises 1666 residues: Latent-transforming growth factor beta-binding protein 4 (1666 aa).

The N-terminal stretch at 1–24 is a signal peptide; that stretch reads MRRPGLGGPCPLLLLLLLPAATSA. The EGF-like 1 domain maps to 148 to 180; sequence ARVLCPLICHNGGVCVKPDRCLCPPDFAGKFCQ. 6 disulfides stabilise this stretch: Cys152-Cys162, Cys156-Cys168, Cys170-Cys179, Cys288-Cys310, Cys297-Cys323, and Cys311-Cys326. The 53-residue stretch at 286-338 folds into the TB 1 domain; that stretch reads GYCFRELRGSECASPLPGLRTQEVCCRGEGLAWGVHDCHPCAEHLRNSNQVSG. Residue Asn351 is glycosylated (N-linked (GlcNAc...) asparagine). The 41-residue stretch at 356–396 folds into the EGF-like 2; calcium-binding domain; it reads DVDECATGGRCQHGECANTRGGYTCVCPDGFLLDSSRSSCI. Cystine bridges form between Cys360/Cys371, Cys366/Cys380, Cys382/Cys395, Cys408/Cys430, Cys417/Cys443, Cys431/Cys446, and Cys432/Cys458. A TB 2 domain is found at 406-458; it reads GPCYRVLHDGGCSLPILRNITKQICCCSRVGKAWGRGCQLCPPYGSEGFREIC. Asn424 is a glycosylation site (N-linked (GlcNAc...) asparagine). The segment at 473–590 is disordered; that stretch reads YNTRPLNQDP…EIPESGPSSS (118 aa). Residues 491 to 502 show a composition bias toward pro residues; it reads RVPPATPRPPTG. Positions 521 to 561 are enriched in basic and acidic residues; it reads PRPRPEPRPRPESRPRPEPRPRPEPRPQPESQPRPESRPRP. Pro residues predominate over residues 562-573; it reads ESQPWPEFPLPS. Over residues 579 to 590 the composition is skewed to low complexity; sequence GPEIPESGPSSS. The EGF-like 3 domain maps to 588–629; that stretch reads SSSMCQRNPQVCGPGRCVPRPSGYTCACDPGFRLGPQGTRCI. Disulfide bonds link Cys592–Cys604, Cys599–Cys613, Cys615–Cys628, Cys634–Cys646, Cys641–Cys655, Cys657–Cys670, Cys676–Cys688, Cys683–Cys697, Cys699–Cys712, Cys718–Cys730, Cys725–Cys739, Cys741–Cys750, Cys757–Cys769, Cys764–Cys778, Cys780–Cys793, Cys799–Cys811, Cys806–Cys820, Cys822–Cys835, Cys881–Cys893, Cys887–Cys902, Cys904–Cys918, Cys924–Cys936, Cys930–Cys945, Cys947–Cys960, Cys966–Cys977, Cys972–Cys986, Cys988–Cys1001, Cys1095–Cys1107, Cys1101–Cys1116, and Cys1118–Cys1131. Residues 630-671 form the EGF-like 4; calcium-binding domain; that stretch reads DIDECRRVPTPCAPGRCENTPGSFRCVCGTGFQAGPRATECL. An EGF-like 5; calcium-binding domain is found at 672–713; it reads DVDECRRVPPPCDRGRCENTPGSFLCVCPAGYQAAPHGASCQ. The EGF-like 6; calcium-binding domain maps to 714–751; it reads DVDECTQSPGLCGRGVCENLPGSFRCVCPAGFRGSACE. An EGF-like 7; calcium-binding domain is found at 753–794; it reads DVDECAQQPPPCGPGRCDNTAGSFHCACPAGFRSRGPGAPCQ. Residues 795–836 form the EGF-like 8; calcium-binding domain; that stretch reads DVDECSRSPSPCAYGRCENTEGSFKCVCPTGFQPNAAGSECE. Residues 877–919 form the EGF-like 9; calcium-binding domain; that stretch reads DVDECSSGTPCGLHGQCTNTKGSFHCSCSTGYRAPSGQPGPCA. The EGF-like 10; calcium-binding domain occupies 920–961; that stretch reads DINECLEGDFCFPHGECLNTDGSFTCTCAPGYRPGPRGASCL. The 41-residue stretch at 962-1002 folds into the EGF-like 11; calcium-binding domain; sequence DVDECSEEDLCQSGICTNTDGSFECICPPGHRAGPDLASCL. An EGF-like 12; calcium-binding domain is found at 1091-1132; that stretch reads DVDECRNRSFCGAHAMCQNLPGSFQCVCDQGYEGARDGRHCV. Asn1097 is a glycosylation site (N-linked (GlcNAc...) asparagine). The segment at 1171-1221 is disordered; sequence TGRCVPPRAPAGTFPGSQPQAPASPSLPARPPAPPPPRRPSPPRQGPVSSG. Residues 1185 to 1197 are compositionally biased toward low complexity; that stretch reads PGSQPQAPASPSL. Pro residues predominate over residues 1198-1215; it reads PARPPAPPPPRRPSPPRQ. A TB 3 domain is found at 1223 to 1277; the sequence is RECYFDTAAPDACDNILARNVTWQECCCTVGEGWGSGCRIQQCPGTETAEYQSLC. 10 disulfides stabilise this stretch: Cys1225–Cys1248, Cys1235–Cys1260, Cys1249–Cys1265, Cys1250–Cys1277, Cys1299–Cys1312, Cys1307–Cys1321, Cys1323–Cys1336, Cys1342–Cys1354, Cys1349–Cys1363, and Cys1365–Cys1378. Residue Asn1242 is glycosylated (N-linked (GlcNAc...) asparagine). Residues 1295-1337 form the EGF-like 13; calcium-binding domain; sequence DVDECQLFQDQVCKSGVCVNTAPGYSCYCSNGFYYHAHRLECV. The EGF-like 14; calcium-binding domain maps to 1338-1379; the sequence is DNDECADEEPACEGGRCVNTVGSYHCTCEPPLVLDGSRRRCV. An N-linked (GlcNAc...) asparagine glycan is attached at Asn1381. Residues 1391–1444 enclose the TB 4 domain; sequence GVCWQEVGPDLVCSRPRLDRQATYTECCCLYGEAWGMDCALCPAQDSDDFEALC. 4 cysteine pairs are disulfide-bonded: Cys1393–Cys1417, Cys1403–Cys1429, Cys1418–Cys1432, and Cys1419–Cys1444. A compositionally biased stretch (pro residues) spans 1488–1500; sequence VLPYDPYPPPPGP. A disordered region spans residues 1488–1566; the sequence is VLPYDPYPPP…SSERGSYTGA (79 aa). The residue at position 1564 (Thr1564) is a Phosphothreonine. 2 EGF-like domains span residues 1575–1615 and 1616–1660; these read EAEE…MSCV and DVNE…HHCA. Cystine bridges form between Cys1579/Cys1590, Cys1585/Cys1599, Cys1601/Cys1614, Cys1620/Cys1635, Cys1630/Cys1644, and Cys1646/Cys1659.

It belongs to the LTBP family. As to quaternary structure, forms part of the large latent transforming growth factor beta precursor complex; removal is essential for activation of complex. Interacts with LTBP1 and TGFB1. Interacts with EFEMP2; this interaction promotes fibrillar deposition of EFEMP2. Contains hydroxylated asparagine residues.

It is found in the secreted. The protein resides in the extracellular space. It localises to the extracellular matrix. In terms of biological role, key regulator of transforming growth factor beta (TGFB1, TGFB2 and TGFB3) that controls TGF-beta activation by maintaining it in a latent state during storage in extracellular space. Associates specifically via disulfide bonds with the Latency-associated peptide (LAP), which is the regulatory chain of TGF-beta, and regulates integrin-dependent activation of TGF-beta. This chain is Latent-transforming growth factor beta-binding protein 4 (Ltbp4), found in Mus musculus (Mouse).